Here is a 209-residue protein sequence, read N- to C-terminus: Redox-sensing transcriptional repressor Rex (209 aa).

The H-T-H motif DNA-binding region spans 16–55 (LYYRFIQNLSLSGKQRVSSAELSEAVKVDSATIRRDFSYF). 90–95 (GVGNLG) is a binding site for NAD(+).

Belongs to the transcriptional regulatory Rex family. Homodimer.

It is found in the cytoplasm. Modulates transcription in response to changes in cellular NADH/NAD(+) redox state. In Bacillus thuringiensis (strain Al Hakam), this protein is Redox-sensing transcriptional repressor Rex.